Here is a 764-residue protein sequence, read N- to C-terminus: ATP-dependent DNA helicase DDM1 (764 aa).

The interval 1–42 is disordered; it reads MVSLRSRKVIPASEMVSDGKTEKDASGDSPTSVLNEEENCEE. Over residues 17-26 the composition is skewed to basic and acidic residues; it reads SDGKTEKDAS. Positions 62-88 form a coiled coil; the sequence is LISEAMAQEEEQLLKLREDEEKANNAG. The interval 129–152 is disordered; it reads IESESQKAEPEKTGRGRKRKAASQ. Basic and acidic residues predominate over residues 132 to 142; sequence ESQKAEPEKTG. The Nuclear localization signal 1 motif lies at 145–152; the sequence is RKRKAASQ. The Helicase ATP-binding domain maps to 214-382; sequence ISLWQNGLNG…WSLLNFILPD (169 aa). 227–234 contributes to the ATP binding site; sequence DQMGLGKT. The short motif at 333–336 is the DEAH box element; that stretch reads DEGH. The Nuclear localization signal 2 motif lies at 429-436; the sequence is LRRMKCDV. Residues 528 to 695 enclose the Helicase C-terminal domain; it reads LLERLLVRLF…STPLEEEDIL (168 aa).

This sequence belongs to the SNF2/RAD54 helicase family. As to quaternary structure, interacts with the MBD domains of MBD2, MBD5 and MBD6.

Its subcellular location is the nucleus. It catalyses the reaction ATP + H2O = ADP + phosphate + H(+). Its activity is regulated as follows. ATPase activity is stimulated 3-fold by DNA (both free and nucleosomal) binding. Its function is as follows. ATP-dependent DNA helicase that plays a role in formation, organization, stability and heritability of heterochromatin and thus regulates several physiological traits. Binds to the nucleosome and promotes chromatin remodeling in an ATP-dependent manner; induces nucleosome repositioning on a short DNA fragment, and, possibly, could be guided to target sites (including silent transposable elements) by small interfering RNAs (siRNAs). Can bind both free and nucleosomal DNA. Required for the heritable maintenance of genome integrity and transcriptional gene silencing (TGS), including homology-dependent gene silencing (HDG silencing), via the maintenance of DNA methylation (mostly on cytosine, in both CpG and CpHpG sites, where H is A, T or C) and of histone methylation (e.g. chromatin methylation). May facilitate localization of MBD proteins at specific nuclear domains. Necessary for the maintenance of the genomic imprint at the MEA locus, especially for the silencing of paternally inherited MEA locus. Plays a major role in the inactivation maintenance of retrotransposons (e.g. Tar17, SINE, LINE, ATLN39, CAC1 (CACTAs), Athila elements, and mutator-like elements MULEs and TIR-MULEs) and the silencing of repeated genes and transgenes (e.g. T-DNA insertions). Required for KYP-dependent histone H3 'Lys-9' (H3K9me) methylation, deacetylation of histone H4 'Lys-16' (H4K16) and MET1-dependent DNA methylation. Involved in the chromatin organization of 5S rRNA genes (localized in the pericentromeric heterochromatin of chromosomes 3, 4, and 5) modifications during heterochromatin establishment. Prevents siRNA accumulation (siRNA are probably involved in epigenetic inheritance and in 5S rRNA genes regulation by silencing). Required during plant organogenesis and development, as well as during seed formation. The polypeptide is ATP-dependent DNA helicase DDM1 (DDM1) (Arabidopsis thaliana (Mouse-ear cress)).